The chain runs to 211 residues: FMN-dependent NADH:quinone oxidoreductase (211 aa).

FMN contacts are provided by residues Ser-10 and 16–18 (STS).

This sequence belongs to the azoreductase type 1 family. Homodimer. It depends on FMN as a cofactor.

The catalysed reaction is 2 a quinone + NADH + H(+) = 2 a 1,4-benzosemiquinone + NAD(+). It catalyses the reaction N,N-dimethyl-1,4-phenylenediamine + anthranilate + 2 NAD(+) = 2-(4-dimethylaminophenyl)diazenylbenzoate + 2 NADH + 2 H(+). In terms of biological role, quinone reductase that provides resistance to thiol-specific stress caused by electrophilic quinones. Functionally, also exhibits azoreductase activity. Catalyzes the reductive cleavage of the azo bond in aromatic azo compounds to the corresponding amines. The protein is FMN-dependent NADH:quinone oxidoreductase of Frankia casuarinae (strain DSM 45818 / CECT 9043 / HFP020203 / CcI3).